The following is a 287-amino-acid chain: MMKNILAIQSHVVYGHAGNSAVEFPMRRLGANVWPLNTVQFSNHTQYGKWTGCVMPPSHLTEIVQGIAAIDKLHTCDAVLSGYLGSAEQGEHILGIVRQVKAANPQAKYFCDPVMGHPEKGCIVAPGVAEFHVRHGLPASDIIAPNLVELEILCEHPVNNVEEAVLAARELIAQGPQIVLVKHLAQAGYSRDRFEMLLVTADEAWHISRPLVDFGMRQPVGVGDVTSGLLLVKLLQGATLQEALEHVTAAVYEIMVTTKAMQEYELQVVAAQDRIAKPEHYFSATKL.

Residues serine 10 and 45–46 (TQ) contribute to the substrate site. Residues aspartate 112, alanine 144, glutamate 149, lysine 182, and 209–212 (RPLV) each bind ATP. Aspartate 224 provides a ligand contact to substrate.

This sequence belongs to the pyridoxine kinase family. PdxY subfamily. As to quaternary structure, homodimer. The cofactor is Mg(2+).

It carries out the reaction pyridoxal + ATP = pyridoxal 5'-phosphate + ADP + H(+). Its pathway is cofactor metabolism; pyridoxal 5'-phosphate salvage; pyridoxal 5'-phosphate from pyridoxal: step 1/1. Its function is as follows. Pyridoxal kinase involved in the salvage pathway of pyridoxal 5'-phosphate (PLP). Catalyzes the phosphorylation of pyridoxal to PLP. The sequence is that of Pyridoxal kinase PdxY from Shigella dysenteriae serotype 1 (strain Sd197).